The primary structure comprises 257 residues: Protein YIPF5 (257 aa).

The Cytoplasmic segment spans residues methionine 1–glutamate 124. Residues threonine 125–glycine 145 form a helical membrane-spanning segment. Position 146 (lysine 146) is a topological domain, lumenal. The chain crosses the membrane as a helical span at residues isoleucine 147–leucine 167. Residues asparagine 168–threonine 173 are Cytoplasmic-facing. A helical membrane pass occupies residues glycine 174–leucine 194. At serine 195–serine 196 the chain is on the lumenal side. The chain crosses the membrane as a helical span at residues phenylalanine 197–glycine 217. Topologically, residues tryptophan 218 to glutamine 236 are cytoplasmic. Residues glutamine 237–phenylalanine 257 traverse the membrane as a helical segment.

The protein belongs to the YIP1 family.

The protein resides in the endoplasmic reticulum membrane. It localises to the golgi apparatus. Its subcellular location is the cis-Golgi network membrane. Its function is as follows. Plays a role in transport between endoplasmic reticulum and Golgi. The chain is Protein YIPF5 (yipf5) from Danio rerio (Zebrafish).